A 151-amino-acid chain; its full sequence is Deoxyuridine 5'-triphosphate nucleotidohydrolase (151 aa).

Substrate is bound by residues 70 to 72 (RSG), Asn83, 87 to 89 (LID), and Lys97.

Belongs to the dUTPase family. Requires Mg(2+) as cofactor.

It catalyses the reaction dUTP + H2O = dUMP + diphosphate + H(+). Its pathway is pyrimidine metabolism; dUMP biosynthesis; dUMP from dCTP (dUTP route): step 2/2. Functionally, this enzyme is involved in nucleotide metabolism: it produces dUMP, the immediate precursor of thymidine nucleotides and it decreases the intracellular concentration of dUTP so that uracil cannot be incorporated into DNA. This is Deoxyuridine 5'-triphosphate nucleotidohydrolase from Idiomarina loihiensis (strain ATCC BAA-735 / DSM 15497 / L2-TR).